Consider the following 425-residue polypeptide: UDP-N-acetyl-D-glucosamine 6-dehydrogenase (425 aa).

5 residues coordinate NAD(+): V17, D35, R40, T86, and T121. Residue C261 is the Nucleophile of the active site. Position 332 (R332) interacts with NAD(+).

It belongs to the UDP-glucose/GDP-mannose dehydrogenase family. As to quaternary structure, homotrimer.

It carries out the reaction UDP-N-acetyl-alpha-D-glucosamine + 2 NAD(+) + H2O = UDP-2-acetamido-2-deoxy-alpha-D-glucuronate + 2 NADH + 3 H(+). Its pathway is capsule biogenesis; capsule polysaccharide biosynthesis. The protein operates within glycan metabolism; Vi-antigen biosynthesis. Functionally, dehydrogenase required for the biosynthesis of the capsular polysaccharide, commonly referred as the Vi antigen, an important virulence factor. Catalyzes the conversion of UDP-N-acetylglucosamine (UDP-GlcNAc) to UDP-N-acetylglucosaminuronic acid (UDP-GlcNAcA). Cannot use UDP-GalNAc, UDP-Glc and UDP-Gal as substrates. The chain is UDP-N-acetyl-D-glucosamine 6-dehydrogenase from Salmonella typhi.